Reading from the N-terminus, the 287-residue chain is Uricase (287 aa).

Residues K11 and T58 each act as charge relay system in the active site. The urate site is built by T58, D59, F160, R177, V219, Q220, and N246. H248 serves as the catalytic Charge relay system. A Microbody targeting signal motif is present at residues 285-287; that stretch reads SRL.

The protein belongs to the uricase family.

Its subcellular location is the peroxisome. It carries out the reaction urate + O2 + H2O = 5-hydroxyisourate + H2O2. Its pathway is purine metabolism; urate degradation; (S)-allantoin from urate: step 1/3. Functionally, catalyzes the oxidation of uric acid to 5-hydroxyisourate, which is further processed to form (S)-allantoin. The chain is Uricase (uox) from Dictyostelium discoideum (Social amoeba).